Consider the following 81-residue polypeptide: Serine/arginine-rich splicing factor 6 (81 aa).

Residues 1–48 (RSRSRSRRSSRSRSRSISKSRSRSRSRSKGRSRSRSKGRKSRSKSKSK) show a composition bias toward basic residues. The tract at residues 1–81 (RSRSRSRRSS…SRSRSRSRSP (81 aa)) is disordered. Positions 62–71 (RSKDEYEKSR) are enriched in basic and acidic residues. The segment covering 72–81 (SRSRSRSRSP) has biased composition (basic residues).

The protein belongs to the splicing factor SR family. Binds SREK1/SFRS12. Interacts with DYRK1A. Extensively phosphorylated on serine residues in the RS domain. Phosphorylated by DYRK1A, probably in the RS domain. Phosphorylation by DYRK1A modulates alternative splice site selection and inhibits the expression of MAPT/Tau exon 10.

The protein resides in the nucleus. The protein localises to the nucleus speckle. Functionally, plays a role in constitutive splicing and modulates the selection of alternative splice sites. Plays a role in the alternative splicing of MAPT/Tau exon 10. Binds to alternative exons of TNC pre-mRNA and promotes the expression of alternatively spliced TNC. Plays a role in wound healing and in the regulation of keratinocyte differentiation and proliferation via its role in alternative splicing. The polypeptide is Serine/arginine-rich splicing factor 6 (SRSF6) (Oryctolagus cuniculus (Rabbit)).